The following is a 110-amino-acid chain: MALWMRLLPLLALLALWGPDPVPAFVNQHLCGSHLVEALYLVCGERGFFYTPKTRREAEDPQVGQVELGGGPGAGSLQPLALEGSLQKRGIVEQCCTSICSLYQLENYCN.

The signal sequence occupies residues 1-24; sequence MALWMRLLPLLALLALWGPDPVPA. 3 disulfides stabilise this stretch: C31–C96, C43–C109, and C95–C100. Residues 57-87 constitute a propeptide, c peptide; the sequence is EAEDPQVGQVELGGGPGAGSLQPLALEGSLQ.

It belongs to the insulin family. Heterodimer of a B chain and an A chain linked by two disulfide bonds.

The protein localises to the secreted. In terms of biological role, insulin decreases blood glucose concentration. It increases cell permeability to monosaccharides, amino acids and fatty acids. It accelerates glycolysis, the pentose phosphate cycle, and glycogen synthesis in liver. In Chlorocebus aethiops (Green monkey), this protein is Insulin (INS).